Consider the following 321-residue polypeptide: Glucokinase (321 aa).

8–13 (GDVGGT) is a binding site for ATP.

Belongs to the bacterial glucokinase family.

The protein localises to the cytoplasm. The enzyme catalyses D-glucose + ATP = D-glucose 6-phosphate + ADP + H(+). This is Glucokinase from Tolumonas auensis (strain DSM 9187 / NBRC 110442 / TA 4).